A 444-amino-acid chain; its full sequence is Phosphoglucosamine mutase (444 aa).

Catalysis depends on Ser102, which acts as the Phosphoserine intermediate. Positions 102, 241, 243, and 245 each coordinate Mg(2+). A Phosphoserine modification is found at Ser102.

Belongs to the phosphohexose mutase family. Mg(2+) is required as a cofactor. In terms of processing, activated by phosphorylation.

The enzyme catalyses alpha-D-glucosamine 1-phosphate = D-glucosamine 6-phosphate. Its function is as follows. Catalyzes the conversion of glucosamine-6-phosphate to glucosamine-1-phosphate. The chain is Phosphoglucosamine mutase from Acidovorax ebreus (strain TPSY) (Diaphorobacter sp. (strain TPSY)).